The primary structure comprises 214 residues: Pyrrolidone-carboxylate peptidase (214 aa).

Residues Glu-80, Cys-143, and His-166 contribute to the active site.

Belongs to the peptidase C15 family. Homotetramer.

It is found in the cytoplasm. The enzyme catalyses Release of an N-terminal pyroglutamyl group from a polypeptide, the second amino acid generally not being Pro.. Its function is as follows. Removes 5-oxoproline from various penultimate amino acid residues except L-proline. The polypeptide is Pyrrolidone-carboxylate peptidase (Klebsiella pneumoniae (strain 342)).